A 187-amino-acid chain; its full sequence is Peptide deformylase (187 aa).

2 residues coordinate Fe cation: C107 and H149. The active site involves E150. A Fe cation-binding site is contributed by H153.

It belongs to the polypeptide deformylase family. Fe(2+) is required as a cofactor.

The enzyme catalyses N-terminal N-formyl-L-methionyl-[peptide] + H2O = N-terminal L-methionyl-[peptide] + formate. Removes the formyl group from the N-terminal Met of newly synthesized proteins. Requires at least a dipeptide for an efficient rate of reaction. N-terminal L-methionine is a prerequisite for activity but the enzyme has broad specificity at other positions. The polypeptide is Peptide deformylase (Picosynechococcus sp. (strain ATCC 27264 / PCC 7002 / PR-6) (Agmenellum quadruplicatum)).